Here is a 1544-residue protein sequence, read N- to C-terminus: Lysine-specific demethylase 5B (1544 aa).

The JmjN domain maps to 32 to 73 (CPVFEPSWEEFADPFAFIHKIRPIAEQTGICKVRPPPDWQPP). Residues 97–187 (TRVKLNFLDQ…ILNPYNLFLS (91 aa)) enclose the ARID domain. Residues Lys148, Lys204, Lys209, Lys242, Lys274, and Lys278 each participate in a glycyl lysine isopeptide (Lys-Gly) (interchain with G-Cter in SUMO2) cross-link. Residues 201 to 230 (TDTKDKEYKPHDIPQRQSVQPSETCPPARR) form a disordered region. The span at 202 to 214 (DTKDKEYKPHDIP) shows a compositional bias: basic and acidic residues. The PHD-type 1 zinc-finger motif lies at 309–359 (LYVCLLCGSGNDEDRLLLCDGCDDSYHTFCLIPPLHDVPKGDWRCPKCLAQ). Tyr425 serves as a coordination point for 2-oxoglutarate. One can recognise a JmjC domain in the interval 453–619 (EYLDSGWNLN…LGRQCVEHYR (167 aa)). Fe cation contacts are provided by His499 and Glu501. 2-oxoglutarate-binding residues include Ser507, Asn509, and Lys517. His587 contacts Fe cation. The segment at 692-744 (CVKCKTTCFMSAISCSCKPGLLVCLHHVKELCSCPPYKYKLRYRYTLDDLYPM) adopts a C5HC2 zinc-finger fold. A Glycyl lysine isopeptide (Lys-Gly) (interchain with G-Cter in SUMO2) cross-link involves residue Lys769. Lys832 is modified (N6-acetyllysine). Position 986 is a phosphoserine (Ser986). The PHD-type 2 zinc finger occupies 1176-1224 (IKICLCQKAPAAPMIQCELCRDAFHTSCVAVPSISQGLRIWLCPHCRRS). The residue at position 1328 (Ser1328) is a Phosphoserine. The segment at 1374–1400 (PSPAQQTDRSSPVRPSSEKNDCCRGKR) is disordered. Polar residues predominate over residues 1376 to 1387 (PAQQTDRSSPVR). Over residues 1389–1400 (SSEKNDCCRGKR) the composition is skewed to basic and acidic residues. Lys1450 participates in a covalent cross-link: Glycyl lysine isopeptide (Lys-Gly) (interchain with G-Cter in SUMO2). Ser1456 is modified (phosphoserine). Residues 1484–1538 (DAICPAVSCLQPEGDEVDWVQCDGSCNQWFHQVCVGVSPEMAEKEDYICVRCTVK) form a PHD-type 3 zinc finger.

This sequence belongs to the JARID1 histone demethylase family. Interacts with FOXG1B, PAX9, MYC, MYCN and RB1. Interacts with HDAC1, HDAC4, HDAC5 and HDAC7. Interacts (via PHD-type 1 zinc finger) with histone H3 unmodified at 'Lys-4'; the interaction is inhibited when histone H3 is methylated at 'Arg-2' or 'Lys-4'. It depends on Fe(2+) as a cofactor. In terms of tissue distribution, ubiquitously expressed, with highest levels in testis. Down-regulated in melanoma and glioblastoma. Up-regulated in breast cancer (at protein level).

The protein localises to the nucleus. It carries out the reaction N(6),N(6),N(6)-trimethyl-L-lysyl(4)-[histone H3] + 3 2-oxoglutarate + 3 O2 = L-lysyl(4)-[histone H3] + 3 formaldehyde + 3 succinate + 3 CO2. Several specific inhibitors are being developed and tested. The inhibitor KDOAM-25 inhibits its demethylase activity, resulting to cell cycle arrest in myeloma cells. Its function is as follows. Histone demethylase that demethylates 'Lys-4' of histone H3, thereby playing a central role in histone code. Does not demethylate histone H3 'Lys-9' or H3 'Lys-27'. Demethylates trimethylated, dimethylated and monomethylated H3 'Lys-4'. Acts as a transcriptional corepressor for FOXG1B and PAX9. Favors the proliferation of breast cancer cells by repressing tumor suppressor genes such as BRCA1 and HOXA5. In contrast, may act as a tumor suppressor for melanoma. Represses the CLOCK-BMAL1 heterodimer-mediated transcriptional activation of the core clock component PER2. The chain is Lysine-specific demethylase 5B (KDM5B) from Homo sapiens (Human).